We begin with the raw amino-acid sequence, 372 residues long: Tubby-like F-box protein 9 (372 aa).

Positions 1–51 (MALWRCSSSWLSSVSRSSGGVGGGESKVSPEIAPVSGGEGEGEEEEGEEER) are disordered. Residues 7–18 (SSSWLSSVSRSS) are compositionally biased toward low complexity. Positions 40–49 (GEGEEEEGEE) are enriched in acidic residues. The F-box domain occupies 50–105 (ERWSRLLPELLTEIMRRVDAGAERWPPRRDVVACACVCRRWRDAAVSVVRPPLECG).

This sequence belongs to the TUB family. Ubiquitous.

In Oryza sativa subsp. japonica (Rice), this protein is Tubby-like F-box protein 9 (TULP9).